The primary structure comprises 393 residues: 4-hydroxyphenylpyruvate dioxygenase (393 aa).

The residue at position 2 (Thr2) is an N-acetylthreonine. 2 consecutive VOC domains span residues 18–149 (HFHS…LVEK) and 180–338 (IIDH…IFTK). Position 132 is an N6-succinyllysine (Lys132). His183 lines the Fe cation pocket. A phosphoserine mark is found at Ser211, Ser226, and Ser250. Fe cation-binding residues include His266 and Glu349.

Belongs to the 4HPPD family. In terms of assembly, homodimer. The cofactor is Fe cation.

The protein localises to the cytoplasm. The protein resides in the endoplasmic reticulum membrane. It localises to the golgi apparatus membrane. The enzyme catalyses 3-(4-hydroxyphenyl)pyruvate + O2 = homogentisate + CO2. It functions in the pathway amino-acid degradation; L-phenylalanine degradation; acetoacetate and fumarate from L-phenylalanine: step 3/6. Catalyzes the conversion of 4-hydroxyphenylpyruvic acid to homogentisic acid, one of the steps in tyrosine catabolism. This is 4-hydroxyphenylpyruvate dioxygenase (HPD) from Bos taurus (Bovine).